The following is a 378-amino-acid chain: Queuine tRNA-ribosyltransferase (378 aa).

The active-site Proton acceptor is D89. Residues 89–93 (DSGGF), D143, Q194, and G221 contribute to the substrate site. The RNA binding stretch occupies residues 252–258 (GVGTPAN). Catalysis depends on D271, which acts as the Nucleophile. Residues 276 to 280 (ARNGR) form an RNA binding; important for wobble base 34 recognition region. The Zn(2+) site is built by C309, C311, C314, and H340.

It belongs to the queuine tRNA-ribosyltransferase family. As to quaternary structure, homodimer. Within each dimer, one monomer is responsible for RNA recognition and catalysis, while the other monomer binds to the replacement base PreQ1. Requires Zn(2+) as cofactor.

It carries out the reaction 7-aminomethyl-7-carbaguanine + guanosine(34) in tRNA = 7-aminomethyl-7-carbaguanosine(34) in tRNA + guanine. Its pathway is tRNA modification; tRNA-queuosine biosynthesis. Catalyzes the base-exchange of a guanine (G) residue with the queuine precursor 7-aminomethyl-7-deazaguanine (PreQ1) at position 34 (anticodon wobble position) in tRNAs with GU(N) anticodons (tRNA-Asp, -Asn, -His and -Tyr). Catalysis occurs through a double-displacement mechanism. The nucleophile active site attacks the C1' of nucleotide 34 to detach the guanine base from the RNA, forming a covalent enzyme-RNA intermediate. The proton acceptor active site deprotonates the incoming PreQ1, allowing a nucleophilic attack on the C1' of the ribose to form the product. After dissociation, two additional enzymatic reactions on the tRNA convert PreQ1 to queuine (Q), resulting in the hypermodified nucleoside queuosine (7-(((4,5-cis-dihydroxy-2-cyclopenten-1-yl)amino)methyl)-7-deazaguanosine). This Lachnoclostridium phytofermentans (strain ATCC 700394 / DSM 18823 / ISDg) (Clostridium phytofermentans) protein is Queuine tRNA-ribosyltransferase.